Here is a 276-residue protein sequence, read N- to C-terminus: ATP synthase subunit a (276 aa).

Helical transmembrane passes span 47–67 (WHIDSLLFSVGLGVLFLWLFY), 107–127 (IAPLGLTIFVWVFLMNLMDLI), 152–172 (DLNVTLGLALSVFVLIVFYSI), 188–208 (PFNHWALIPINFVLETVTLIA), 226–246 (LIFILIALMPWWAQFALSVPW), and 247–267 (AIFHILVIVLQAFIFMMLTIV).

This sequence belongs to the ATPase A chain family. As to quaternary structure, F-type ATPases have 2 components, CF(1) - the catalytic core - and CF(0) - the membrane proton channel. CF(1) has five subunits: alpha(3), beta(3), gamma(1), delta(1), epsilon(1). CF(0) has three main subunits: a(1), b(2) and c(9-12). The alpha and beta chains form an alternating ring which encloses part of the gamma chain. CF(1) is attached to CF(0) by a central stalk formed by the gamma and epsilon chains, while a peripheral stalk is formed by the delta and b chains.

It is found in the cell inner membrane. Key component of the proton channel; it plays a direct role in the translocation of protons across the membrane. In Shewanella halifaxensis (strain HAW-EB4), this protein is ATP synthase subunit a.